Reading from the N-terminus, the 438-residue chain is Cell division cycle-associated 7-like protein (438 aa).

The short motif at 9–33 is the Integrase domain-binding motif 1 (IBM1) element; the sequence is IPKEVADIFSAPSDDEEFVGFQDDV. Phosphoserine is present on serine 21. Residues 56–115 form a PSIP1-binding region; it reads VCFRSKYFTEELRRIFKEDTDSEMEDFEGFTESELNMSSNPELMESELSDSDKAYPVMND. An Integrase domain-binding motif 2 (IBM2) motif is present at residues 63 to 89; sequence FTEELRRIFKEDTDSEMEDFEGFTESE. Positions 74 to 199 are disordered; sequence DTDSEMEDFE…ESRAESQENS (126 aa). Threonine 75 carries the post-translational modification Phosphothreonine. Residues 75-86 are compositionally biased toward acidic residues; the sequence is TDSEMEDFEGFT. A Phosphoserine modification is found at serine 77. Threonine 86 carries the post-translational modification Phosphothreonine. 5 positions are modified to phosphoserine: serine 101, serine 104, serine 135, serine 136, and serine 159. Residues 152–167 show a composition bias toward basic and acidic residues; it reads RTPDKDSSHLLDSKTD. Over residues 168-177 the composition is skewed to basic residues; sequence LRRKKSSRQP. Serine 183 and serine 185 each carry phosphoserine. The interval 201–223 is MYC-binding; that stretch reads ALLKRAMNIKENKAMLAQLLAEL. Residues lysine 210 and lysine 213 each participate in a glycyl lysine isopeptide (Lys-Gly) (interchain with G-Cter in SUMO2) cross-link. Phosphoserine is present on serine 249.

Interacts with MYC. Interacts (via IBM motifs) with PSIP1 (via IBD domain); phosphorylation increases its affinity for PSIP1. In terms of processing, phosphorylation increases its interaction with PSIP1. Expressed in all tissues but not detected in total brain.

Its subcellular location is the cytoplasm. The protein resides in the nucleus. Functionally, plays a role in transcriptional regulation as a repressor that inhibits monoamine oxidase A (MAOA) activity and gene expression by binding to the promoter. Plays an important oncogenic role in mediating the full transforming effect of MYC in medulloblastoma cells. Involved in apoptotic signaling pathways; May act downstream of P38-kinase and BCL-2, but upstream of CASP3/caspase-3 as well as CCND1/cyclin D1 and E2F1. This is Cell division cycle-associated 7-like protein (Cdca7l) from Mus musculus (Mouse).